A 304-amino-acid chain; its full sequence is Undecaprenyl-diphosphatase (304 aa).

The next 8 membrane-spanning stretches (helical) occupy residues 5–25 (FLFILKALIIAIVEGLTEFVP), 47–67 (GFPEMYEVVIQLGAILAVVVL), 72–92 (ISSSVVEFLSYIFSFIGLKTS), 111–131 (FGINVIIGTIPAAILGLLFHD), 137–157 (LFSTKTVAIGFIVGGILLIVI), 209–231 (ISGLSTTVATEFTFFLAIPAMVG), 248–268 (TNWISLILGFIVAFIVSLVVI), and 283–303 (FAIYRVFAGIVLAILIFTKVI).

This sequence belongs to the UppP family.

It localises to the cell membrane. It catalyses the reaction di-trans,octa-cis-undecaprenyl diphosphate + H2O = di-trans,octa-cis-undecaprenyl phosphate + phosphate + H(+). Functionally, catalyzes the dephosphorylation of undecaprenyl diphosphate (UPP). Confers resistance to bacitracin. This is Undecaprenyl-diphosphatase from Clostridium perfringens (strain 13 / Type A).